A 345-amino-acid chain; its full sequence is Nuclear distribution protein nudE-like 1 (345 aa).

A coiled-coil region spans residues Q28–V190. The self-association stretch occupies residues V56–S166. An interaction with KATNB1 region spans residues D64–E189. The interval Y114 to I133 is required for interaction with PAFAH1B1. Residues R175–V345 form an interaction with CENPF region. Residues E189–V256 form an interaction with YWHAE region. Residues T191–V345 are interaction with NEFL. The interval A195–V256 is interaction with KATNA1. Residue S215 is modified to Phosphoserine. T219 carries the phosphothreonine; by CDK1 and MAPK1 modification. At S231 the chain carries Phosphoserine. The interval T241 to Q280 is interaction with DISC1. The residue at position 242 (S242) is a Phosphoserine; by CDK1. A Phosphothreonine; by CDK1 and MAPK1 modification is found at T245. Residues V256–V291 form a required for localization to the centrosome and interaction with dynein, dynactin, tubulin gamma, PCM1 and PCNT region. A lipid anchor (S-palmitoyl cysteine; by ZDHHC2, ZDHHC3 and ZDHHC7) is attached at C273. The disordered stretch occupies residues G315–V345. A compositionally biased stretch (low complexity) spans L329–G339. S344 is modified (phosphoserine).

It belongs to the nudE family. In terms of assembly, interacts with PLEKHM1 (via N- and C-terminus). Interacts with YWHAE. Interacts directly with NEFL and indirectly with NEFH. Interacts with microtubules. Self-associates. Interacts with DISC1, dynein, dynactin, tubulin gamma, KATNA1, KATNB1, PAFAH1B1, PCM1 and PCNT. Interacts (via C-terminus) with CENPF. Interacts with ZNF365. Interacts with GTP-bound RAB9A; the interaction may lead to RAB9A-dynein motor tethering. In terms of processing, phosphorylated in mitosis. Can be phosphorylated by CDK1, CDK5 and MAPK1. Phosphorylation by CDK5 promotes interaction with KATNA1 and YWHAE. Post-translationally, palmitoylation at Cys-273 reduces affinity for dynein. Expressed in brain, heart, kidney, liver, lung, pancreas, placenta and skeletal muscle.

The protein localises to the cytoplasm. The protein resides in the cytoskeleton. It localises to the microtubule organizing center. It is found in the centrosome. Its subcellular location is the chromosome. The protein localises to the centromere. The protein resides in the kinetochore. It localises to the spindle. In terms of biological role, required for organization of the cellular microtubule array and microtubule anchoring at the centrosome. May regulate microtubule organization at least in part by targeting the microtubule severing protein KATNA1 to the centrosome. Also positively regulates the activity of the minus-end directed microtubule motor protein dynein. May enhance dynein-mediated microtubule sliding by targeting dynein to the microtubule plus ends. Required for several dynein- and microtubule-dependent processes such as the maintenance of Golgi integrity, the centripetal motion of secretory vesicles and the coupling of the nucleus and centrosome. Also required during brain development for the migration of newly formed neurons from the ventricular/subventricular zone toward the cortical plate. Plays a role, together with DISC1, in the regulation of neurite outgrowth. Required for mitosis in some cell types but appears to be dispensible for mitosis in cortical neuronal progenitors, which instead requires NDE1. Facilitates the polymerization of neurofilaments from the individual subunits NEFH and NEFL. Positively regulates lysosome peripheral distribution and ruffled border formation in osteoclasts. Plays a role, together with DISC1, in the regulation of neurite outgrowth. May act as a RAB9A/B effector that tethers RAB9-associated late endosomes to the dynein motor for their retrograde transport to the trans-Golgi network. The polypeptide is Nuclear distribution protein nudE-like 1 (NDEL1) (Homo sapiens (Human)).